The following is a 208-amino-acid chain: Small ribosomal subunit protein uS4 (208 aa).

Residues 95-157 (RRIDNVVYRA…DSLKKLVRSN (63 aa)) enclose the S4 RNA-binding domain.

Belongs to the universal ribosomal protein uS4 family. In terms of assembly, part of the 30S ribosomal subunit. Contacts protein S5. The interaction surface between S4 and S5 is involved in control of translational fidelity.

In terms of biological role, one of the primary rRNA binding proteins, it binds directly to 16S rRNA where it nucleates assembly of the body of the 30S subunit. With S5 and S12 plays an important role in translational accuracy. This chain is Small ribosomal subunit protein uS4, found in Borrelia hermsii (strain HS1 / DAH).